Here is a 270-residue protein sequence, read N- to C-terminus: Putative pyruvate, phosphate dikinase regulatory protein 2 (270 aa).

An ADP-binding site is contributed by G151–T158.

Belongs to the pyruvate, phosphate/water dikinase regulatory protein family. PDRP subfamily.

It catalyses the reaction N(tele)-phospho-L-histidyl/L-threonyl-[pyruvate, phosphate dikinase] + ADP = N(tele)-phospho-L-histidyl/O-phospho-L-threonyl-[pyruvate, phosphate dikinase] + AMP + H(+). The catalysed reaction is N(tele)-phospho-L-histidyl/O-phospho-L-threonyl-[pyruvate, phosphate dikinase] + phosphate + H(+) = N(tele)-phospho-L-histidyl/L-threonyl-[pyruvate, phosphate dikinase] + diphosphate. Bifunctional serine/threonine kinase and phosphorylase involved in the regulation of the pyruvate, phosphate dikinase (PPDK) by catalyzing its phosphorylation/dephosphorylation. The polypeptide is Putative pyruvate, phosphate dikinase regulatory protein 2 (Listeria innocua serovar 6a (strain ATCC BAA-680 / CLIP 11262)).